Consider the following 213-residue polypeptide: Orotate phosphoribosyltransferase (213 aa).

Lysine 26 contacts 5-phospho-alpha-D-ribose 1-diphosphate. 34–35 (FF) is a binding site for orotate. 5-phospho-alpha-D-ribose 1-diphosphate-binding positions include 72–73 (YK), arginine 98, lysine 99, lysine 102, histidine 104, and 123–131 (DDVISAGTS). The orotate site is built by serine 127 and arginine 155.

Belongs to the purine/pyrimidine phosphoribosyltransferase family. PyrE subfamily. Homodimer. Mg(2+) is required as a cofactor.

It carries out the reaction orotidine 5'-phosphate + diphosphate = orotate + 5-phospho-alpha-D-ribose 1-diphosphate. Its pathway is pyrimidine metabolism; UMP biosynthesis via de novo pathway; UMP from orotate: step 1/2. Its function is as follows. Catalyzes the transfer of a ribosyl phosphate group from 5-phosphoribose 1-diphosphate to orotate, leading to the formation of orotidine monophosphate (OMP). The protein is Orotate phosphoribosyltransferase of Neisseria meningitidis serogroup C (strain 053442).